Consider the following 184-residue polypeptide: Ribosome maturation factor RimM (184 aa).

Positions 93–165 (DEGWYEHELV…YILITPPSGL (73 aa)) constitute a PRC barrel domain.

Belongs to the RimM family. As to quaternary structure, binds ribosomal protein uS19.

The protein resides in the cytoplasm. Its function is as follows. An accessory protein needed during the final step in the assembly of 30S ribosomal subunit, possibly for assembly of the head region. Essential for efficient processing of 16S rRNA. May be needed both before and after RbfA during the maturation of 16S rRNA. It has affinity for free ribosomal 30S subunits but not for 70S ribosomes. The protein is Ribosome maturation factor RimM of Paenarthrobacter aurescens (strain TC1).